The primary structure comprises 324 residues: Glyoxylate/hydroxypyruvate reductase B (324 aa).

Active-site residues include R237 and E266. Residue H285 is the Proton donor of the active site.

The protein belongs to the D-isomer specific 2-hydroxyacid dehydrogenase family. GhrB subfamily. Homodimer.

Its subcellular location is the cytoplasm. The catalysed reaction is glycolate + NADP(+) = glyoxylate + NADPH + H(+). It catalyses the reaction (R)-glycerate + NAD(+) = 3-hydroxypyruvate + NADH + H(+). It carries out the reaction (R)-glycerate + NADP(+) = 3-hydroxypyruvate + NADPH + H(+). Catalyzes the NADPH-dependent reduction of glyoxylate and hydroxypyruvate into glycolate and glycerate, respectively. The protein is Glyoxylate/hydroxypyruvate reductase B of Salmonella dublin (strain CT_02021853).